The sequence spans 139 residues: MRVLAIDWGEKYVGLAISDPLRIIAQGLDVWEIKGEEDFVSRLKRLVEDYQVKEIVLGYPISLRGHENERTQKVRHIAELIESVIGIPVKFVDERLTTMEAEKVLLEGDIKRKKRKLLKNKQAAVIILQKYLDSSSLDT.

Belongs to the YqgF nuclease family.

The protein resides in the cytoplasm. Its function is as follows. Could be a nuclease involved in processing of the 5'-end of pre-16S rRNA. The chain is Putative pre-16S rRNA nuclease from Dictyoglomus thermophilum (strain ATCC 35947 / DSM 3960 / H-6-12).